The sequence spans 569 residues: Glucose-6-phosphate isomerase, cytosolic 1A (569 aa).

E360 serves as the catalytic Proton donor. Active-site residues include H391 and K516.

Belongs to the GPI family. In terms of assembly, homodimer.

It localises to the cytoplasm. It carries out the reaction alpha-D-glucose 6-phosphate = beta-D-fructose 6-phosphate. It functions in the pathway carbohydrate degradation; glycolysis; D-glyceraldehyde 3-phosphate and glycerone phosphate from D-glucose: step 2/4. This chain is Glucose-6-phosphate isomerase, cytosolic 1A (PGIC1-A), found in Clarkia lewisii (Farewell-to-spring).